A 444-amino-acid polypeptide reads, in one-letter code: uncharacterized protein (444 aa).

The transit peptide at Met1 to Arg72 directs the protein to the chloroplast. The interval His77 to Lys107 is disordered. The span at Ser92–Asp101 shows a compositional bias: polar residues. Residues Glu175 to Ile272 enclose the CRM domain. The stretch at Asp292 to Glu355 forms a coiled coil. Disordered regions lie at residues Glu344–Ser364 and Lys392–Asp426. Positions Cys346 to Gly357 are enriched in acidic residues. Basic and acidic residues predominate over residues Asp406–Asp426.

It localises to the plastid. The protein localises to the chloroplast. This is an uncharacterized protein from Arabidopsis thaliana (Mouse-ear cress).